The chain runs to 378 residues: Opsin Rh4 (378 aa).

Topologically, residues 1-53 (MEPLCNASEPPLRPEARSSGNGDLQFLGWNVPPDQIQYIPEHWLTQLEPPASM) are extracellular. The N-linked (GlcNAc...) asparagine glycan is linked to asparagine 6. A helical membrane pass occupies residues 54–78 (HYMLGVFYIFLFCASTVGNGMVIWI). The Cytoplasmic portion of the chain corresponds to 79 to 90 (FSTSKSLRTPSN). Residues 91–111 (MFVLNLAVFDLIMCLKAPIFI) form a helical membrane-spanning segment. Topologically, residues 112–127 (YNSFHRGFALGNTWCQ) are extracellular. A disulfide bridge links cysteine 126 with cysteine 203. Residues 128-148 (IFASIGSYSGIGAGMTNAAIG) traverse the membrane as a helical segment. Residues 149–167 (YDRYNVITKPMNRNMTFTK) lie on the Cytoplasmic side of the membrane. Residues 168 to 192 (AVIMNIIIWLYCTPWVVLPLTQFWD) traverse the membrane as a helical segment. Residues 193–216 (RFVPEGYLTSCSFDYLSDNFDTRL) are Extracellular-facing. A helical transmembrane segment spans residues 217-244 (FVGTIFFFSFVCPTLMILYYYSQIVGHV). Residues 245–280 (FSHEKALREQAKKMNVESLRSNVDKSKETAEIRIAK) lie on the Cytoplasmic side of the membrane. A helical transmembrane segment spans residues 281–304 (AAITICFLFFVSWTPYGVMSLIGA). The Extracellular portion of the chain corresponds to 305-312 (FGDKSLLT). The chain crosses the membrane as a helical span at residues 313–337 (PGATMIPACTCKLVACIDPFVYAIS). Position 324 is an N6-(retinylidene)lysine (lysine 324). Residues 338–378 (HPRYRLELQKRCPWLGVNEKSGEISSAQSTTTQEQQQTTAA) are Cytoplasmic-facing.

The protein belongs to the G-protein coupled receptor 1 family. Opsin subfamily. Phosphorylated on some or all of the serine and threonine residues present in the C-terminal region.

It localises to the membrane. Its function is as follows. Visual pigments are the light-absorbing molecules that mediate vision. They consist of an apoprotein, opsin, covalently linked to cis-retinal. The chain is Opsin Rh4 (Rh4) from Drosophila melanogaster (Fruit fly).